A 97-amino-acid chain; its full sequence is Large ribosomal subunit protein eL21 (97 aa).

A disordered region spans residues 1–24 (MQKSEGFRSKTRYKLQKHPRQKGM). Residues 9-21 (SKTRYKLQKHPRQ) show a composition bias toward basic residues.

The protein belongs to the eukaryotic ribosomal protein eL21 family.

The chain is Large ribosomal subunit protein eL21 from Methanococcus maripaludis (strain DSM 14266 / JCM 13030 / NBRC 101832 / S2 / LL).